Consider the following 144-residue polypeptide: Large ribosomal subunit protein uL11 (144 aa).

This sequence belongs to the universal ribosomal protein uL11 family. As to quaternary structure, part of the ribosomal stalk of the 50S ribosomal subunit. Interacts with L10 and the large rRNA to form the base of the stalk. L10 forms an elongated spine to which L12 dimers bind in a sequential fashion forming a multimeric L10(L12)X complex. In terms of processing, one or more lysine residues are methylated.

Forms part of the ribosomal stalk which helps the ribosome interact with GTP-bound translation factors. This Streptomyces griseus subsp. griseus (strain JCM 4626 / CBS 651.72 / NBRC 13350 / KCC S-0626 / ISP 5235) protein is Large ribosomal subunit protein uL11.